The sequence spans 90 residues: Small ribosomal subunit protein uS15 (90 aa).

The protein belongs to the universal ribosomal protein uS15 family. As to quaternary structure, part of the 30S ribosomal subunit. Forms a bridge to the 50S subunit in the 70S ribosome, contacting the 23S rRNA.

One of the primary rRNA binding proteins, it binds directly to 16S rRNA where it helps nucleate assembly of the platform of the 30S subunit by binding and bridging several RNA helices of the 16S rRNA. Functionally, forms an intersubunit bridge (bridge B4) with the 23S rRNA of the 50S subunit in the ribosome. In Wolbachia sp. subsp. Drosophila simulans (strain wRi), this protein is Small ribosomal subunit protein uS15.